Here is an 830-residue protein sequence, read N- to C-terminus: Receptor-like protein kinase HERK 1 (830 aa).

The signal sequence occupies residues 1-24 (MGIEKFETFILISTISILLCICHG). Residues 25–405 (FTPVDNYLIN…SSSSSKSNLG (381 aa)) are Extracellular-facing. Asn40, Asn146, Asn217, Asn280, and Asn381 each carry an N-linked (GlcNAc...) asparagine glycan. Residues 406-426 (LIVGSAIGSLLAVVFLGSCFV) form a helical membrane-spanning segment. The Cytoplasmic segment spans residues 427 to 830 (LYKKRKRGQD…FSQLVKSEGR (404 aa)). Residues 485–758 (FDESRNIGVG…GDVLWNLEYA (274 aa)) form the Protein kinase domain. ATP-binding positions include 491–499 (IGVGGFGKV) and Lys513. Residue Asp609 is the Proton acceptor of the active site.

It belongs to the protein kinase superfamily. Ser/Thr protein kinase family. Post-translationally, autophosphorylated. Expressed in most vegetative tissues, including leaves, stems and roots, especially in cell elongation regions.

The protein localises to the cell membrane. Functionally, receptor-like protein kinase required for cell elongation during vegetative growth, mostly in a brassinosteroid-(BR-) independent manner. This Arabidopsis thaliana (Mouse-ear cress) protein is Receptor-like protein kinase HERK 1 (HERK1).